A 534-amino-acid polypeptide reads, in one-letter code: Transcription factor RBF1 (534 aa).

Positions 1 to 36 are disordered; it reads MSSNKNQSDLNIPTNSASLKQKQRQQLGIKSEIGAS. The stretch at 77–147 forms a coiled coil; the sequence is AAAAELQHRA…YQQQQQLHQL (71 aa). 4 disordered regions span residues 262–285, 353–372, 402–439, and 477–534; these read ANLY…HNEE, QQQQ…QQAA, QLSQ…PHGL, and TQGN…SGFL. Over residues 267 to 285 the composition is skewed to basic and acidic residues; that stretch reads NEKDQKRKNKPDEPGHNEE. The stretch at 332-386 forms a coiled coil; that stretch reads HHLLQQEQQQQQQQQQQQQQQQQQQQQQQHNANSQAQQQAAQLQQQMQQQLQASG. The segment covering 402–435 has biased composition (low complexity); sequence QLSQQQSQQQQLHHIPQQRQRTQSQQSQQQPQQT.

The protein belongs to the RBF1 family.

It localises to the nucleus. The protein localises to the chromosome. The protein resides in the telomere. Its function is as follows. Transcriptional activator that binds to the RPG box and to telomeres. Involved in the regulation of the transition between yeast and filamentous forms and plays a role in virulence. Induces expression of HWP1, a major hyphal cell protein and virulence factor. The chain is Transcription factor RBF1 (RBF1) from Candida albicans (strain SC5314 / ATCC MYA-2876) (Yeast).